Consider the following 140-residue polypeptide: 3-hydroxyacyl-[acyl-carrier-protein] dehydratase FabZ (140 aa).

H47 is an active-site residue.

This sequence belongs to the thioester dehydratase family. FabZ subfamily.

It is found in the cytoplasm. It carries out the reaction a (3R)-hydroxyacyl-[ACP] = a (2E)-enoyl-[ACP] + H2O. Functionally, involved in unsaturated fatty acids biosynthesis. Catalyzes the dehydration of short chain beta-hydroxyacyl-ACPs and long chain saturated and unsaturated beta-hydroxyacyl-ACPs. This Streptococcus equi subsp. equi (strain 4047) protein is 3-hydroxyacyl-[acyl-carrier-protein] dehydratase FabZ.